The primary structure comprises 356 residues: Tungsten-containing aldehyde ferredoxin oxidoreductase cofactor-modifying protein (356 aa).

The 214-residue stretch at 1 to 214 folds into the Radical SAM core domain; it reads MKYLYLEITS…PIVNELYKIA (214 aa). The [4Fe-4S] cluster site is built by Cys-12, Cys-16, and Cys-19.

The protein belongs to the radical SAM superfamily. Requires [4Fe-4S] cluster as cofactor.

In terms of biological role, involved in the biosynthesis of a molybdopterin-based tungsten cofactor. The polypeptide is Tungsten-containing aldehyde ferredoxin oxidoreductase cofactor-modifying protein (cmo) (Pyrococcus furiosus (strain ATCC 43587 / DSM 3638 / JCM 8422 / Vc1)).